The following is a 382-amino-acid chain: Alkanesulfonate monooxygenase (382 aa).

It belongs to the SsuD family. In terms of assembly, homotetramer.

It catalyses the reaction an alkanesulfonate + FMNH2 + O2 = an aldehyde + FMN + sulfite + H2O + 2 H(+). Catalyzes the desulfonation of aliphatic sulfonates. The polypeptide is Alkanesulfonate monooxygenase (Yersinia pestis bv. Antiqua (strain Antiqua)).